Reading from the N-terminus, the 290-residue chain is Glycine--tRNA ligase alpha subunit (290 aa).

This sequence belongs to the class-II aminoacyl-tRNA synthetase family. Tetramer of two alpha and two beta subunits.

The protein localises to the cytoplasm. It carries out the reaction tRNA(Gly) + glycine + ATP = glycyl-tRNA(Gly) + AMP + diphosphate. This is Glycine--tRNA ligase alpha subunit from Prochlorococcus marinus (strain NATL2A).